The sequence spans 365 residues: MNTFGREFRITTFGESHGKAIGVVIDGVPAGLELTEEDIKRELERRMFCHIPVLNPRCEPEEVEILSGVKEGYTQGTPIAVVIWNRRVISSYYEELWMKPRPGHADFAYYLKYGRYYDHRGGGRASGRTTAAVVAAGAVAKKILALAGAEVAGHIVELGGVEINASYTYEDVKKSWERPLPVVDQQALDKMLEKIQEAAARGDSIGGGVEVWAVGVPPGLGEPHFGKIKADIAAAAFSIPGAIALDWGMGRALAKMWGSEANDPITVANGRPTLATNKIGGVLGGITVGTPIYFRVWFKPTPSVRKPQQTVDLAKMEPTTIEFKGRYDVSIVPKALVALEAITAVTLADHLLRAGLIRRDKPLEK.

Arg-46 serves as a coordination point for NADP(+). FMN is bound by residues 124–126, Gly-284, 299–303, and Arg-326; these read RAS and KPTPS.

The protein belongs to the chorismate synthase family. It depends on FMNH2 as a cofactor.

The enzyme catalyses 5-O-(1-carboxyvinyl)-3-phosphoshikimate = chorismate + phosphate. The protein operates within metabolic intermediate biosynthesis; chorismate biosynthesis; chorismate from D-erythrose 4-phosphate and phosphoenolpyruvate: step 7/7. Its function is as follows. Catalyzes the anti-1,4-elimination of the C-3 phosphate and the C-6 proR hydrogen from 5-enolpyruvylshikimate-3-phosphate (EPSP) to yield chorismate, which is the branch point compound that serves as the starting substrate for the three terminal pathways of aromatic amino acid biosynthesis. This reaction introduces a second double bond into the aromatic ring system. This Pyrobaculum islandicum (strain DSM 4184 / JCM 9189 / GEO3) protein is Chorismate synthase.